We begin with the raw amino-acid sequence, 143 residues long: Small ribosomal subunit protein uS12 (143 aa).

This sequence belongs to the universal ribosomal protein uS12 family. Component of the 40S small ribosomal subunit.

The protein localises to the cytoplasm. It localises to the cytosol. It is found in the rough endoplasmic reticulum. In Gillichthys mirabilis (Long-jawed mudsucker), this protein is Small ribosomal subunit protein uS12 (rps23).